The chain runs to 63 residues: Conotoxin Gm5.1 (63 aa).

An N-terminal signal peptide occupies residues 1 to 21 (MRYLPVFVILLLLIASIPSDT). Positions 22–50 (VQLKTKDDMPLASFHGNGRRILRMLSNKR) are excised as a propeptide.

The protein belongs to the conotoxin T superfamily. Contains 2 disulfide bonds that can be either 'C1-C3, C2-C4' or 'C1-C4, C2-C3', since these disulfide connectivities have been observed for conotoxins with cysteine framework V (for examples, see AC P0DQQ7 and AC P81755). As to expression, expressed by the venom duct.

It is found in the secreted. In Conus gloriamaris (Glory-of-the-Sea cone), this protein is Conotoxin Gm5.1.